A 487-amino-acid polypeptide reads, in one-letter code: Glutamyl-tRNA(Gln) amidotransferase subunit A (487 aa).

Active-site charge relay system residues include K79 and S154. The active-site Acyl-ester intermediate is the S178.

It belongs to the amidase family. GatA subfamily. As to quaternary structure, heterotrimer of A, B and C subunits.

The enzyme catalyses L-glutamyl-tRNA(Gln) + L-glutamine + ATP + H2O = L-glutaminyl-tRNA(Gln) + L-glutamate + ADP + phosphate + H(+). Functionally, allows the formation of correctly charged Gln-tRNA(Gln) through the transamidation of misacylated Glu-tRNA(Gln) in organisms which lack glutaminyl-tRNA synthetase. The reaction takes place in the presence of glutamine and ATP through an activated gamma-phospho-Glu-tRNA(Gln). In Roseiflexus sp. (strain RS-1), this protein is Glutamyl-tRNA(Gln) amidotransferase subunit A.